Here is a 287-residue protein sequence, read N- to C-terminus: MFFICFNKKSNVVGLQISKCSGEFCIYREPKDKTYWNNFYYMSFYVNNKKVGVNCNITDIEYSLLDIFLHGPFQVNLSEYLNVCDCVNKRFLKYERMLKEKVVNGININFSLCENKNSLVFLDNYNLQEYLGPNNVLYVFVNSVLMDKKYFSREIRNKDFWNEWRCTKMPLYVNSKRVGKFYYYSEYVLHSLPGEEPNVLEYFVLDLFLFGPVEIEVSEYEKRTKQREYNTSLYLYLYKMDLISGVNIIFDEKTTDYSKILQTQFQTYHNLDDDRILNVCVITRMRL.

The protein belongs to the A.longa ORF167/ORF288 family.

Its subcellular location is the plastid. This is an uncharacterized protein from Euglena longa (Euglenophycean alga).